We begin with the raw amino-acid sequence, 322 residues long: Eukaryotic translation initiation factor 3 subunit I (322 aa).

5 WD repeats span residues 4–43, 46–85, 141–180, 184–223, and 281–322; these read GHER…RLGT, GHQG…VIAS, MTES…KVVD, DHSA…CLKS, and GHFG…NIFE.

The protein belongs to the eIF-3 subunit I family. As to quaternary structure, component of the eukaryotic translation initiation factor 3 (eIF-3) complex. The eIF-3 complex interacts with pix.

Its subcellular location is the cytoplasm. Its function is as follows. Component of the eukaryotic translation initiation factor 3 (eIF-3) complex, which is involved in protein synthesis of a specialized repertoire of mRNAs and, together with other initiation factors, stimulates binding of mRNA and methionyl-tRNAi to the 40S ribosome. The eIF-3 complex specifically targets and initiates translation of a subset of mRNAs involved in cell proliferation. The sequence is that of Eukaryotic translation initiation factor 3 subunit I from Drosophila yakuba (Fruit fly).